We begin with the raw amino-acid sequence, 328 residues long: Probable GDP-L-fucose synthase 1 (328 aa).

Position 25 to 31 (25 to 31) interacts with NADP(+); sequence GHRGLVG. Catalysis depends on Y152, which acts as the Proton donor/acceptor. Residues K156, 179 to 182, and H195 each bind NADP(+); that span reads PTNL. Residues R203, W218, R225, and D285 each contribute to the substrate site.

This sequence belongs to the NAD(P)-dependent epimerase/dehydratase family. Fucose synthase subfamily. Homodimer.

The catalysed reaction is GDP-beta-L-fucose + NADP(+) = GDP-4-dehydro-alpha-D-rhamnose + NADPH + H(+). It functions in the pathway nucleotide-sugar biosynthesis; GDP-L-fucose biosynthesis via de novo pathway; GDP-L-fucose from GDP-alpha-D-mannose: step 2/2. Functionally, catalyzes the two-step NADP-dependent conversion of GDP-4-dehydro-6-deoxy-D-mannose to GDP-fucose, involving an epimerase and a reductase reaction. This is Probable GDP-L-fucose synthase 1 from Oryza sativa subsp. japonica (Rice).